The chain runs to 565 residues: 13S globulin seed storage protein 1 (565 aa).

The N-terminal stretch at 1–20 is a signal peptide; it reads MSTKLILSFSLCLMVLSCSA. 2 disulfides stabilise this stretch: C44/C77 and C120/C384. The Cupin type-1 1 domain maps to 49 to 331; it reads LTASEPSRRV…FRNVDQETIS (283 aa). 3 disordered regions span residues 126-224, 271-301, and 356-376; these read SESE…IRDG, GQSK…SDDD, and EYEE…SGRS. Composition is skewed to basic and acidic residues over residues 137–224, 275–297, and 356–370; these read RDQR…IRDG, QSRE…QSRE, and EYEE…DRKR. Residues 390-539 form the Cupin type-1 2 domain; the sequence is QNVNRPSRAD…SYDISTKEAF (150 aa).

This sequence belongs to the 11S seed storage protein (globulins) family. As to quaternary structure, hexamer; each subunit is composed of an acidic and a basic chain derived from a single precursor and linked by a disulfide bond. As to expression, expressed only in immature seeds.

Its function is as follows. Seed storage protein. The protein is 13S globulin seed storage protein 1 (FA02) of Fagopyrum esculentum (Common buckwheat).